Consider the following 493-residue polypeptide: MALRIYNTLTGEKDTFVPLHPGKAGMYVCGVTVYDYCHIGHARANVVFDVIYRYLGYSGYAVTYVRNFTDIDDKIINRANQEGVDYTTISERYIEAFNQDMARLGLAKPTVEPKATDHMGGIISVIETLIAKGHAYESDGDVYYAVESFPSYLRLSGRNLEDMLAGARVEVDDRKRNPMDFALWKGSKPGEPSWDSPWGAGRPGWHIECSAMSMEYLGKTFDIHGGGKDLVFPHHENEIAQSEAANGCQFVRYWMHNGFVNINSEKMSKSLGNFFTIREVLEQYDPETLRFFILSAHYRSPIDFSDQNLNDAQAGLERIYSCLAAVDGAMEGQDVPNQPVEGAPLPPAGAELHEKLQSLISRFREAMDDDFNTAQALGVLFEAVRATNRFMAESGDQTPATLALLGQVRRLFAETGDVLGLFTSQPAAWLESIKQAKSDQMEISPQEIEQLIAERAAARTNRDFKRGDEIRDLLLQKGIQLLDSPQGTTWNIR.

Residue C29 coordinates Zn(2+). A 'HIGH' region motif is present at residues 31-41; that stretch reads VTVYDYCHIGH. 3 residues coordinate Zn(2+): C209, H234, and E238. The short motif at 266–270 is the 'KMSKS' region element; the sequence is KMSKS. Residue K269 participates in ATP binding.

The protein belongs to the class-I aminoacyl-tRNA synthetase family. In terms of assembly, monomer. Zn(2+) serves as cofactor.

It localises to the cytoplasm. The enzyme catalyses tRNA(Cys) + L-cysteine + ATP = L-cysteinyl-tRNA(Cys) + AMP + diphosphate. The polypeptide is Cysteine--tRNA ligase (Pelobacter propionicus (strain DSM 2379 / NBRC 103807 / OttBd1)).